We begin with the raw amino-acid sequence, 161 residues long: Cyclic pyranopterin monophosphate synthase (161 aa).

Substrate is bound by residues 75-77 and 113-114; these read LCH and ME. D128 is an active-site residue.

It belongs to the MoaC family. As to quaternary structure, homohexamer; trimer of dimers.

It carries out the reaction (8S)-3',8-cyclo-7,8-dihydroguanosine 5'-triphosphate = cyclic pyranopterin phosphate + diphosphate. Its pathway is cofactor biosynthesis; molybdopterin biosynthesis. Functionally, catalyzes the conversion of (8S)-3',8-cyclo-7,8-dihydroguanosine 5'-triphosphate to cyclic pyranopterin monophosphate (cPMP). The polypeptide is Cyclic pyranopterin monophosphate synthase (Salmonella dublin (strain CT_02021853)).